The following is a 98-amino-acid chain: Complement inhibitor RaCI1 (98 aa).

The signal sequence occupies residues 1-20; the sequence is MNAMLVLFIASALFISEHNT. Disulfide bonds link C33–C57, C38–C59, and C53–C74. Residues 79–98 form a disordered region; the sequence is TTKPPMAPGDNKDNKEEESN. A compositionally biased stretch (basic and acidic residues) spans 88 to 98; that stretch reads DNKDNKEEESN.

This sequence belongs to the RaCI family. Expressed in salivary glands.

It localises to the secreted. Functionally, complement inhibitor. Prevents complement-mediated C5 activation by binding to C5. Binds C5 at a different binding site than the other tick complement inhibitors OmCI and CirpT1, and the drug eculizumab. Inhibits the complement in human and guinea pig but not in other species tested (rabbit, rat, mouse, and pig). This is Complement inhibitor RaCI1 from Rhipicephalus appendiculatus (Brown ear tick).